We begin with the raw amino-acid sequence, 702 residues long: Cell adhesion molecule CEACAM5 (702 aa).

A signal peptide spans 1-34 (MESPSAPPHRWCIPWQRLLLTASLLTFWNPPTTA). The 110-residue stretch at 35-144 (KLTIESTPFN…TGQFRVYPEL (110 aa)) folds into the Ig-like V-type domain. Asparagine 104, asparagine 115, asparagine 152, asparagine 182, asparagine 197, asparagine 204, asparagine 208, asparagine 246, asparagine 256, asparagine 274, asparagine 288, asparagine 292, asparagine 309, asparagine 330, asparagine 351, asparagine 360, asparagine 375, asparagine 432, asparagine 466, asparagine 480, asparagine 508, asparagine 529, asparagine 553, asparagine 560, asparagine 580, asparagine 612, asparagine 650, and asparagine 665 each carry an N-linked (GlcNAc...) asparagine glycan. 6 consecutive Ig-like C2-type domains span residues 145–232 (PKPS…VILN), 240–315 (PTIS…TVTT), 323–410 (PKPF…VILN), 418–495 (PTIS…KTIT), 501–588 (PKPS…VTLD), and 593–675 (PDTP…ITVS). A disulfide bond links cysteine 167 and cysteine 215. Cysteine 259 and cysteine 299 are disulfide-bonded. Cysteine 345 and cysteine 393 are joined by a disulfide. Cysteines 437 and 477 form a disulfide. Cysteine 523 and cysteine 571 are joined by a disulfide. An intrachain disulfide couples cysteine 615 to cysteine 655. Alanine 685 is lipidated: GPI-anchor amidated alanine. Residues 686–702 (GATVGIMIGVLVGVALI) constitute a propeptide, removed in mature form.

This sequence belongs to the immunoglobulin superfamily. CEA family. Homodimer. In terms of processing, complex immunoreactive glycoprotein with a MW of 180 kDa comprising 60% carbohydrate. In terms of tissue distribution, expressed in columnar epithelial and goblet cells of the colon (at protein level). Found in adenocarcinomas of endodermally derived digestive system epithelium and fetal colon.

Its subcellular location is the cell membrane. It is found in the apical cell membrane. The protein resides in the cell surface. In terms of biological role, cell surface glycoprotein that plays a role in cell adhesion, intracellular signaling and tumor progression. Mediates homophilic and heterophilic cell adhesion with other carcinoembryonic antigen-related cell adhesion molecules, such as CEACAM6. Plays a role as an oncogene by promoting tumor progression; induces resistance to anoikis of colorectal carcinoma cells. (Microbial infection) Receptor for E.coli Dr adhesins. Binding of E.coli Dr adhesins leads to dissociation of the homodimer. The chain is Cell adhesion molecule CEACAM5 from Homo sapiens (Human).